We begin with the raw amino-acid sequence, 402 residues long: Cytochrome b561 and DOMON domain-containing protein At4g17280 (402 aa).

An N-terminal signal peptide occupies residues 1–31 (MSNHMSIMKFLNQILCLSLILSISMTTLSFA). In terms of domain architecture, DOMON spans 54–171 (LDSFLHYTYE…GTINTVWQDG (118 aa)). A Cytochrome b561 domain is found at 183–379 (TSGNNVRSVS…LEAFTWYVVI (197 aa)). 2 helical membrane passes run 218 to 238 (IHGI…AIIA) and 250 to 270 (AWFY…VAGW). Residues H219, H255, and H288 each contribute to the heme b site. The chain crosses the membrane as a helical span at residues 290–310 (AIGIALFSLATVQVFAMFLRP). H324 is a heme b binding site. A run of 2 helical transmembrane segments spans residues 326 to 346 (TIGY…LGIL) and 359 to 379 (IIVV…YVVI).

Heme b serves as cofactor.

The protein localises to the membrane. Its function is as follows. May act as a catecholamine-responsive trans-membrane electron transporter. The sequence is that of Cytochrome b561 and DOMON domain-containing protein At4g17280 from Arabidopsis thaliana (Mouse-ear cress).